A 393-amino-acid polypeptide reads, in one-letter code: uncharacterized protein (393 aa).

A disordered region spans residues 345 to 393 (PNKWATDDAARREMERTRKARYRAKNRAVADPEDSPPGKRLRRGPKSST). The span at 349–361 (ATDDAARREMERT) shows a compositional bias: basic and acidic residues. The segment covering 383-393 (KRLRRGPKSST) has biased composition (basic residues).

This is an uncharacterized protein from Ictalurid herpesvirus 1 (strain Auburn) (IcHV-1).